The chain runs to 327 residues: MSKNFQEPIFDVAQLAHVELLSPKLEESIVFFTKYLGMEVTARAGNSVYLRAYEDFYHNTLKITESAEAGLGHVGWRASSPQALERRVLELEKSGLGRGWIDGDIGHGKAYQFTTPDGHQMEIFFEVEYYKPQPEQKTKLLNRPSKRPAQGVPVRRLDHINLMTSNPGVDTQFMIDTLGFRLREQIRDKGKILGSWISVSNLVHEIAFMQEPNQEKGKLHHLCYWYGIPQNLYDLADLLKDHEYFIEVPPNKHGISQAFCMYVYEPGGNRIELFGDAGYLITDPTWEPVIWEMEDVPGNGDTWIGTAFPDSWWLRGTPVTTKEVVKP.

2 VOC domains span residues 14-126 (QLAH…IFFE) and 156-276 (RLDH…LFGD). Residues histidine 159, histidine 221, and glutamate 272 each contribute to the Fe cation site.

The protein belongs to the extradiol ring-cleavage dioxygenase family. It depends on Fe(2+) as a cofactor.

The catalysed reaction is catechol + O2 = (2Z,4E)-2-hydroxy-6-oxohexa-2,4-dienoate + H(+). The protein is Metapyrocatechase (pheB) of Geobacillus stearothermophilus (Bacillus stearothermophilus).